Here is a 152-residue protein sequence, read N- to C-terminus: Transcriptional repressor NrdR (152 aa).

The segment at 3 to 34 (CPFCSTEETKVIDSRLVSEGYQVRRRRECTNC) is a zinc-finger region. In terms of domain architecture, ATP-cone spans 49 to 139 (PKIVKTDGYR…VYLSFENINE (91 aa)).

This sequence belongs to the NrdR family. Requires Zn(2+) as cofactor.

Functionally, negatively regulates transcription of bacterial ribonucleotide reductase nrd genes and operons by binding to NrdR-boxes. The chain is Transcriptional repressor NrdR from Actinobacillus succinogenes (strain ATCC 55618 / DSM 22257 / CCUG 43843 / 130Z).